A 257-amino-acid polypeptide reads, in one-letter code: 1-(5-phosphoribosyl)-5-[(5-phosphoribosylamino)methylideneamino] imidazole-4-carboxamide isomerase (257 aa).

The Proton acceptor role is filled by Asp-8. The Proton donor role is filled by Asp-129.

It belongs to the HisA/HisF family.

It localises to the cytoplasm. The enzyme catalyses 1-(5-phospho-beta-D-ribosyl)-5-[(5-phospho-beta-D-ribosylamino)methylideneamino]imidazole-4-carboxamide = 5-[(5-phospho-1-deoxy-D-ribulos-1-ylimino)methylamino]-1-(5-phospho-beta-D-ribosyl)imidazole-4-carboxamide. It functions in the pathway amino-acid biosynthesis; L-histidine biosynthesis; L-histidine from 5-phospho-alpha-D-ribose 1-diphosphate: step 4/9. The chain is 1-(5-phosphoribosyl)-5-[(5-phosphoribosylamino)methylideneamino] imidazole-4-carboxamide isomerase from Cyanothece sp. (strain PCC 7425 / ATCC 29141).